Reading from the N-terminus, the 147-residue chain is Endoribonuclease YbeY (147 aa).

Zn(2+) contacts are provided by histidine 109, histidine 113, and histidine 119.

It belongs to the endoribonuclease YbeY family. Zn(2+) is required as a cofactor.

It is found in the cytoplasm. Its function is as follows. Single strand-specific metallo-endoribonuclease involved in late-stage 70S ribosome quality control and in maturation of the 3' terminus of the 16S rRNA. The polypeptide is Endoribonuclease YbeY (Thiobacillus denitrificans (strain ATCC 25259 / T1)).